We begin with the raw amino-acid sequence, 231 residues long: Phosphatidylserine decarboxylase proenzyme (231 aa).

Ser188 acts as the Schiff-base intermediate with substrate; via pyruvic acid in catalysis. A Pyruvic acid (Ser); by autocatalysis modification is found at Ser188.

The protein belongs to the phosphatidylserine decarboxylase family. PSD-A subfamily. As to quaternary structure, heterodimer of a large membrane-associated beta subunit and a small pyruvoyl-containing alpha subunit. Requires pyruvate as cofactor. Post-translationally, is synthesized initially as an inactive proenzyme. Formation of the active enzyme involves a self-maturation process in which the active site pyruvoyl group is generated from an internal serine residue via an autocatalytic post-translational modification. Two non-identical subunits are generated from the proenzyme in this reaction, and the pyruvate is formed at the N-terminus of the alpha chain, which is derived from the carboxyl end of the proenzyme. The post-translation cleavage follows an unusual pathway, termed non-hydrolytic serinolysis, in which the side chain hydroxyl group of the serine supplies its oxygen atom to form the C-terminus of the beta chain, while the remainder of the serine residue undergoes an oxidative deamination to produce ammonia and the pyruvoyl prosthetic group on the alpha chain.

The protein resides in the cell membrane. The catalysed reaction is a 1,2-diacyl-sn-glycero-3-phospho-L-serine + H(+) = a 1,2-diacyl-sn-glycero-3-phosphoethanolamine + CO2. It participates in phospholipid metabolism; phosphatidylethanolamine biosynthesis; phosphatidylethanolamine from CDP-diacylglycerol: step 2/2. Catalyzes the formation of phosphatidylethanolamine (PtdEtn) from phosphatidylserine (PtdSer). This is Phosphatidylserine decarboxylase proenzyme from Rickettsia akari (strain Hartford).